A 36-amino-acid polypeptide reads, in one-letter code: Toxin Bcg III 29.21 (36 aa).

Cysteine 6 and cysteine 31 are oxidised to a cystine.

It is found in the secreted. The protein localises to the nematocyst. This is Toxin Bcg III 29.21 from Bunodosoma cangicum (Sea anemone).